The chain runs to 142 residues: Hemoglobin subunit alpha (142 aa).

The Globin domain maps to 2–142; that stretch reads VLSDADKTHV…VATVLTSKYR (141 aa). Ser4 is modified (phosphoserine). N6-succinyllysine is present on Lys8. Thr9 carries the phosphothreonine modification. At Lys12 the chain carries N6-succinyllysine. The residue at position 17 (Lys17) is an N6-acetyllysine; alternate. At Lys17 the chain carries N6-succinyllysine; alternate. Residue Tyr25 is modified to Phosphotyrosine. At Ser36 the chain carries Phosphoserine. N6-succinyllysine is present on Lys41. The residue at position 50 (Ser50) is a Phosphoserine. His59 serves as a coordination point for O2. Residue His88 coordinates heme b. At Ser103 the chain carries Phosphoserine. Thr109 is subject to Phosphothreonine. Phosphoserine occurs at positions 125 and 132. 2 positions are modified to phosphothreonine: Thr135 and Thr138. Ser139 is subject to Phosphoserine.

Belongs to the globin family. Heterotetramer of two alpha chains and two beta chains. Red blood cells.

In terms of biological role, involved in oxygen transport from the lung to the various peripheral tissues. Functionally, hemopressin acts as an antagonist peptide of the cannabinoid receptor CNR1. Hemopressin-binding efficiently blocks cannabinoid receptor CNR1 and subsequent signaling. The chain is Hemoglobin subunit alpha (HBA) from Dasyurus viverrinus (Eastern quoll).